A 64-amino-acid chain; its full sequence is Large ribosomal subunit protein bL35 (64 aa).

Positions 17–41 (TGSGKVKRERMNGSHNLEHKNRKRT) are disordered. The span at 25–35 (ERMNGSHNLEH) shows a compositional bias: basic and acidic residues.

The protein belongs to the bacterial ribosomal protein bL35 family.

This chain is Large ribosomal subunit protein bL35, found in Chlorobaculum parvum (strain DSM 263 / NCIMB 8327) (Chlorobium vibrioforme subsp. thiosulfatophilum).